A 1522-amino-acid chain; its full sequence is Paired amphipathic helix protein pst1 (1522 aa).

The segment at 139–174 (TILSSTDSNIPRPGTVKSSASPFVPNQNPSAPPPPP) is disordered. In terms of domain architecture, PAH 1 spans 178 to 248 (RQLNVTDALS…QGFNTFLPPG (71 aa)). The tract at residues 307-339 (QSSASHPVLQPPAPSTLQFNPSPSPAAPSYPPV) is disordered. Residues 328–337 (SPSPAAPSYP) show a composition bias toward pro residues. The 71-residue stretch at 345–415 (QAADLDQAIN…EEFKRFLPDV (71 aa)) folds into the PAH 2 domain. Disordered stretches follow at residues 422–504 (ETQD…AFNV), 928–968 (AREN…DESS), and 1343–1522 (SGKA…KDDL). A compositionally biased stretch (polar residues) spans 426–441 (KSTVVPQESATATPKR). Serine 442 is modified (phosphoserine). Low complexity predominate over residues 442 to 468 (SPSATPTSALPPIGKFAPPTTAKAQPA). Threonine 446 carries the phosphothreonine modification. A PAH 3 domain is found at 504–576 (VPIAQNKNPS…NWLKDLVKYN (73 aa)). Basic and acidic residues predominate over residues 928–960 (ARENRSSVKEDYVSESTERTPDASEIDEHISEH). A compositionally biased stretch (polar residues) spans 1385-1398 (GKSSVTRGNKTNLK). Over residues 1403-1432 (RNNDDSSNKINLSEKEKEKESIEDEEKNRE) the composition is skewed to basic and acidic residues. Serine 1443 is subject to Phosphoserine. Residues 1461–1474 (TSSHRPERSSEKKS) are compositionally biased toward basic and acidic residues. Over residues 1478–1487 (VFTSVKQTAE) the composition is skewed to polar residues. The segment covering 1488-1522 (NDADNEDDKTDMDDQTEETLDADNTMEEEPSKDDL) has biased composition (acidic residues).

The protein resides in the nucleus. Has a role in modulating the nuclear import of TF1 virus-like particles. Essential for viability. The sequence is that of Paired amphipathic helix protein pst1 (pst1) from Schizosaccharomyces pombe (strain 972 / ATCC 24843) (Fission yeast).